The sequence spans 179 residues: MARLQEFYKEKVVGDLTAKFAYKSAMEVPRILKITLNMGLSEAIADKKIIEHAVGDLTKIAGQKPVVTKARKAIAGFKIREGYPIGCMVTLRGAQMYEFLDRFITVALPRVRDFRGISGKAFDGRGNYNIGVKEQIIFPEIEYDKIDALRGMNISITTTAKTDDEAKALLAAFKFPFRN.

Belongs to the universal ribosomal protein uL5 family. In terms of assembly, part of the 50S ribosomal subunit; part of the 5S rRNA/L5/L18/L25 subcomplex. Contacts the 5S rRNA and the P site tRNA. Forms a bridge to the 30S subunit in the 70S ribosome.

In terms of biological role, this is one of the proteins that bind and probably mediate the attachment of the 5S RNA into the large ribosomal subunit, where it forms part of the central protuberance. In the 70S ribosome it contacts protein S13 of the 30S subunit (bridge B1b), connecting the 2 subunits; this bridge is implicated in subunit movement. Contacts the P site tRNA; the 5S rRNA and some of its associated proteins might help stabilize positioning of ribosome-bound tRNAs. The protein is Large ribosomal subunit protein uL5 of Herminiimonas arsenicoxydans.